We begin with the raw amino-acid sequence, 176 residues long: Ribosome rescue factor SmrB (176 aa).

The Smr domain occupies 93 to 168; it reads LDLHGYRQSE…GDAALLVLID (76 aa).

It belongs to the SmrB family. As to quaternary structure, associates with collided ribosomes, but not with correctly translating polysomes.

In terms of biological role, acts as a ribosome collision sensor. Detects stalled/collided disomes (pairs of ribosomes where the leading ribosome is stalled and a second ribosome has collided with it) and endonucleolytically cleaves mRNA at the 5' boundary of the stalled ribosome. Stalled/collided disomes form a new interface (primarily via the 30S subunits) that binds SmrB. Cleaved mRNA becomes available for tmRNA ligation, leading to ribosomal subunit dissociation and rescue of stalled ribosomes. The protein is Ribosome rescue factor SmrB of Shewanella baltica (strain OS155 / ATCC BAA-1091).